We begin with the raw amino-acid sequence, 884 residues long: Putative GTP diphosphokinase RSH1, chloroplastic (884 aa).

A chloroplast-targeting transit peptide spans 1-55 (MTSASSMSVSVECVNICNLTKGDGNARSDCSALSCAWKAPRALTGFLASTAHPPV). Positions 172 to 279 (FIIHPVAVAR…VKLADRLHNM (108 aa)) constitute an HD domain. One can recognise a TGS domain in the interval 563–626 (LGSRVFVFTP…ENAEVVEIVT (64 aa)). Residues 711–727 (QSQDKSRDTTPAPQNGS) show a composition bias toward polar residues. The segment at 711–747 (QSQDKSRDTTPAPQNGSVWAPKVNGKHNKAIKNSSSD) is disordered. The ACT domain occupies 797 to 868 (WLCVVSMDRK…LVLGVLGWSS (72 aa)).

It belongs to the RelA/SpoT family. In terms of assembly, interacts with RPP4. Interacts with RPP5. In terms of tissue distribution, expressed in hypocotyls, shoots, cotyledons, rosette leaves, sepals and pistils.

The protein localises to the plastid. It localises to the chloroplast. It catalyses the reaction GTP + ATP = guanosine 3'-diphosphate 5'-triphosphate + AMP. Functionally, may be involved in a rapid plant ppGpp (guanosine 3'-diphosphate 5'-diphosphate)-mediated response to pathogens and other stresses. Unable to functionally complement E.coli relA mutants. This is Putative GTP diphosphokinase RSH1, chloroplastic (RSH1) from Arabidopsis thaliana (Mouse-ear cress).